We begin with the raw amino-acid sequence, 73 residues long: UPF0235 protein PERMA_1406 (73 aa).

The protein belongs to the UPF0235 family.

The sequence is that of UPF0235 protein PERMA_1406 from Persephonella marina (strain DSM 14350 / EX-H1).